A 501-amino-acid polypeptide reads, in one-letter code: MLAATGSLLATIWAALHPRTLLVAAVTFLLLADYFKNRRPKNYPPGPWGLPFVGNIFQLDFGQPHLSIQPLVKKYGNIFSLNLGDITSVVITGLPLIKEALTQMEQNIMNRPLSVMQERISNKNGLIFSSGQIWKEQRRFALMTLRNFGLGKKSLEERMQEEASHLVEAIREEEGKPFNPHFSINNAVSNIICSVTFGERFDYHDSRFQEMLRLLDEVMYLETTMISQLYNIFPWIMKYIPGSHQKVFRNWEKLKLFVSCMIDDHRKDWNPDEPRDFIDAFLKEMTKYPEKTTSFNEENLICSTLDLFFAGTETTSTTLRWALLYMALYPEVQEKVQAEIDRVIGQKRAARLADRESMPYTNAVIHEVQRMGNIIPLNVPREVAMDTNLNGFHLPKGTMVLTNLTALHRDPKEWATPDVFNPEHFLENGQFKKRESFLPFSMGKRACLGEQLARSELFIFFTSLMQKFTFNPPINEKLSPKFRNGLTLSPVSHRICAVPRQ.

Cys-447 provides a ligand contact to heme.

Belongs to the cytochrome P450 family. The cofactor is heme.

The protein localises to the endoplasmic reticulum membrane. The protein resides in the microsome membrane. It carries out the reaction an organic molecule + reduced [NADPH--hemoprotein reductase] + O2 = an alcohol + oxidized [NADPH--hemoprotein reductase] + H2O + H(+). This is Cytochrome P450 2J6 (Cyp2j6) from Mus musculus (Mouse).